The chain runs to 310 residues: Putative HTH-type transcriptional regulatory protein YN1551_1579 (310 aa).

The HTH cro/C1-type domain maps to 125–180 (LKHKREEMGYSIGDVAKFLGVSRKAIYDYEKGDSDVSLEVAEKLIDLFGDDIIGDV). Positions 136–155 (IGDVAKFLGVSRKAIYDYEK) form a DNA-binding region, H-T-H motif.

In Saccharolobus islandicus (strain Y.N.15.51 / Yellowstone #2) (Sulfolobus islandicus), this protein is Putative HTH-type transcriptional regulatory protein YN1551_1579.